Here is a 363-residue protein sequence, read N- to C-terminus: Osmoprotective compounds uptake ATP-binding protein GgtA (363 aa).

Positions 4-234 (VSFEQVTKQF…PANLFVAGFI (231 aa)) constitute an ABC transporter domain. 36 to 43 (GPSGCGKT) provides a ligand contact to ATP.

Belongs to the ABC transporter superfamily. In terms of assembly, the complex is composed of two ATP-binding proteins (GgtA), two transmembrane proteins (GgtC and GgtD) and a solute-binding protein (GgtB).

It is found in the cell membrane. Its function is as follows. Part of the ABC transporter complex GgtABCD involved in the uptake of the osmoprotective compounds glucosylglycerol (GG), sucrose and trehalose. Responsible for energy coupling to the transport system. The sequence is that of Osmoprotective compounds uptake ATP-binding protein GgtA from Synechocystis sp. (strain ATCC 27184 / PCC 6803 / Kazusa).